We begin with the raw amino-acid sequence, 121 residues long: Neuromedin-B (121 aa).

The signal sequence occupies residues 1–24; it reads MTLRAVGVRLLGGLLLFALLAAGA. Met-56 carries the post-translational modification Methionine amide. The propeptide occupies 60-121; the sequence is SLEPPSPSLL…RRLLVQTLQK (62 aa). The segment at 61-80 is disordered; sequence LEPPSPSLLGTAPHTSLRDQ.

It belongs to the bombesin/neuromedin-B/ranatensin family.

The protein resides in the secreted. Its subcellular location is the cell projection. It is found in the neuron projection. Its function is as follows. Stimulates smooth muscle contraction. Induces sighing by acting directly on the pre-Botzinger complex, a cluster of several thousand neurons in the ventrolateral medulla responsible for inspiration during respiratory activity. Contributes to the induction of sneezing following exposure to chemical irritants or allergens which causes release of NMB by nasal sensory neurons and activation of NMBR-expressing neurons in the sneeze-evoking region of the brainstem. These in turn activate neurons of the caudal ventral respiratory group, giving rise to the sneezing response. Contributes to induction of acute itch, possibly through activation of the NMBR receptor on dorsal root ganglion neurons. Increases expression of NMBR and steroidogenic mediators STAR, CYP11A1 and HSD3B1 in Leydig cells, induces secretion of testosterone by Leydig cells and also promotes Leydig cell proliferation. Plays a role in the innate immune response to influenza A virus infection by enhancing interferon alpha expression and reducing expression of IL6. Plays a role in CSF1-induced proliferation of osteoclast precursors by contributing to the positive regulation of the expression of the CSF1 receptor CSF1R. The chain is Neuromedin-B (NMB) from Bos taurus (Bovine).